We begin with the raw amino-acid sequence, 640 residues long: Threonine--tRNA ligase (640 aa).

The TGS domain occupies 1–61; it reads MPIITLPDGS…DHDATLQIIT (61 aa). Positions 242-533 are catalytic; the sequence is DHRKLGKRLD…LIEHYEGAFP (292 aa). The Zn(2+) site is built by C333, H384, and H510.

Belongs to the class-II aminoacyl-tRNA synthetase family. In terms of assembly, homodimer. The cofactor is Zn(2+).

It is found in the cytoplasm. It catalyses the reaction tRNA(Thr) + L-threonine + ATP = L-threonyl-tRNA(Thr) + AMP + diphosphate + H(+). Its function is as follows. Catalyzes the attachment of threonine to tRNA(Thr) in a two-step reaction: L-threonine is first activated by ATP to form Thr-AMP and then transferred to the acceptor end of tRNA(Thr). Also edits incorrectly charged L-seryl-tRNA(Thr). The sequence is that of Threonine--tRNA ligase from Azotobacter vinelandii (strain DJ / ATCC BAA-1303).